A 555-amino-acid chain; its full sequence is Urocanate hydratase (555 aa).

NAD(+)-binding positions include 51 to 52 (GG), Gln129, 175 to 177 (GMG), Glu195, Arg200, 241 to 242 (NA), 262 to 266 (QTSAH), 272 to 273 (YL), and Tyr321. Residue Cys409 is part of the active site. Position 491 (Gly491) interacts with NAD(+).

The protein belongs to the urocanase family. NAD(+) is required as a cofactor.

It localises to the cytoplasm. It carries out the reaction 4-imidazolone-5-propanoate = trans-urocanate + H2O. Its pathway is amino-acid degradation; L-histidine degradation into L-glutamate; N-formimidoyl-L-glutamate from L-histidine: step 2/3. Functionally, catalyzes the conversion of urocanate to 4-imidazolone-5-propionate. In Rhizorhabdus wittichii (strain DSM 6014 / CCUG 31198 / JCM 15750 / NBRC 105917 / EY 4224 / RW1) (Sphingomonas wittichii), this protein is Urocanate hydratase.